Consider the following 319-residue polypeptide: Malate dehydrogenase (319 aa).

Residues 10–15 (GAGNIG) and Asp34 contribute to the NAD(+) site. Arg83 and Arg89 together coordinate substrate. Residues Asn96 and 119-121 (ITN) contribute to the NAD(+) site. Positions 121 and 152 each coordinate substrate. His176 serves as the catalytic Proton acceptor.

This sequence belongs to the LDH/MDH superfamily. MDH type 3 family.

It carries out the reaction (S)-malate + NAD(+) = oxaloacetate + NADH + H(+). Catalyzes the reversible oxidation of malate to oxaloacetate. The protein is Malate dehydrogenase of Francisella tularensis subsp. holarctica (strain FTNF002-00 / FTA).